The primary structure comprises 143 residues: Small ribosomal subunit protein uS12B (143 aa).

Proline 62 carries the post-translational modification 3,4-dihydroxyproline.

The protein belongs to the universal ribosomal protein uS12 family. Component of the small ribosomal subunit (SSU). Mature yeast ribosomes consist of a small (40S) and a large (60S) subunit. The 40S small subunit contains 1 molecule of ribosomal RNA (18S rRNA) and at least 33 different proteins. The large 60S subunit contains 3 rRNA molecules (25S, 5.8S and 5S rRNA) and at least 46 different proteins. Hydroxylation at Pro-62 affects translation termination efficiency.

It is found in the cytoplasm. It localises to the nucleus. Its subcellular location is the nucleolus. In terms of biological role, component of the ribosome, a large ribonucleoprotein complex responsible for the synthesis of proteins in the cell. The small ribosomal subunit (SSU) binds messenger RNAs (mRNAs) and translates the encoded message by selecting cognate aminoacyl-transfer RNA (tRNA) molecules. The large subunit (LSU) contains the ribosomal catalytic site termed the peptidyl transferase center (PTC), which catalyzes the formation of peptide bonds, thereby polymerizing the amino acids delivered by tRNAs into a polypeptide chain. The nascent polypeptides leave the ribosome through a tunnel in the LSU and interact with protein factors that function in enzymatic processing, targeting, and the membrane insertion of nascent chains at the exit of the ribosomal tunnel. This chain is Small ribosomal subunit protein uS12B (rps2302), found in Schizosaccharomyces pombe (strain 972 / ATCC 24843) (Fission yeast).